The chain runs to 296 residues: Cobalamin trafficking protein CblD (296 aa).

The transit peptide at 1 to 38 directs the protein to the mitochondrion; the sequence is MAHVLCNRARLVSYLPGFCSLVKRVINPRAFSTAGSSG. The residue at position 203 (lysine 203) is an N6-acetyllysine.

Heterodimer with MMACHC. Forms a multiprotein complex with MMACHC, MTR and MTRR.

It is found in the cytoplasm. The protein localises to the mitochondrion. Its function is as follows. Involved in cobalamin metabolism and trafficking. Plays a role in regulating the biosynthesis and the proportion of two coenzymes, methylcob(III)alamin (MeCbl) and 5'-deoxyadenosylcobalamin (AdoCbl). Promotes oxidation of cob(II)alamin bound to MMACHC. The processing of cobalamin in the cytosol occurs in a multiprotein complex composed of at least MMACHC, MMADHC, MTRR (methionine synthase reductase) and MTR (methionine synthase) which may contribute to shuttle safely and efficiently cobalamin towards MTR in order to produce methionine. This is Cobalamin trafficking protein CblD from Mus musculus (Mouse).